We begin with the raw amino-acid sequence, 180 residues long: Probable chorismate pyruvate-lyase (180 aa).

Substrate is bound by residues Arg76, Leu113, and Glu171.

Belongs to the UbiC family.

Its subcellular location is the cytoplasm. It catalyses the reaction chorismate = 4-hydroxybenzoate + pyruvate. Its pathway is cofactor biosynthesis; ubiquinone biosynthesis. Functionally, removes the pyruvyl group from chorismate, with concomitant aromatization of the ring, to provide 4-hydroxybenzoate (4HB) for the ubiquinone pathway. The protein is Probable chorismate pyruvate-lyase of Pseudoalteromonas translucida (strain TAC 125).